A 138-amino-acid polypeptide reads, in one-letter code: Cysteine desulfuration protein SufE (138 aa).

Cysteine 51 acts as the Cysteine persulfide intermediate in catalysis.

It belongs to the SufE family. As to quaternary structure, homodimer. Interacts with SufS.

The protein localises to the cytoplasm. It functions in the pathway cofactor biosynthesis; iron-sulfur cluster biosynthesis. Its function is as follows. Participates in cysteine desulfuration mediated by SufS. Cysteine desulfuration mobilizes sulfur from L-cysteine to yield L-alanine and constitutes an essential step in sulfur metabolism for biosynthesis of a variety of sulfur-containing biomolecules. Functions as a sulfur acceptor for SufS, by mediating the direct transfer of the sulfur atom from the S-sulfanylcysteine of SufS, an intermediate product of cysteine desulfuration process. The chain is Cysteine desulfuration protein SufE from Sodalis glossinidius (strain morsitans).